Consider the following 108-residue polypeptide: MKALCLLLLPVLGLLVSSKTLCSMEEAINERIQEVAGSLIFRAISSIGLECQSVTSRGDLATCPRGFAVTGCTCGSACGSWDVRAETTCHCQCAGMDWTGARCCRVQP.

The N-terminal stretch at 1-18 is a signal peptide; sequence MKALCLLLLPVLGLLVSS. Cystine bridges form between cysteine 51-cysteine 104, cysteine 63-cysteine 103, cysteine 72-cysteine 89, cysteine 74-cysteine 91, and cysteine 78-cysteine 93.

This sequence belongs to the resistin/FIZZ family. In terms of assembly, homodimer; disulfide-linked. Interacts with DEFA1. Expressed in white adipose tissue (at protein level). Widely expressed, with particularly strong expression in lung, bone marrow, breast and peripheral blood. Expressed strongly in bone marrow and at lower levels in lung, but not detected in other tissues. Isoform 2 is detected in adipose tissue, bone marrow, brain, lung, peripheral blood, placenta and thymus.

It localises to the secreted. In terms of biological role, hormone that seems to suppress insulin ability to stimulate glucose uptake into adipose cells. Potentially links obesity to diabetes. Promotes chemotaxis in myeloid cells. This chain is Resistin (RETN), found in Homo sapiens (Human).